The primary structure comprises 192 residues: UPF0312 protein YE1254 (192 aa).

The first 23 residues, 1–23 (MFNKTLLGLTVGALMFTAGSAVA), serve as a signal peptide directing secretion.

This sequence belongs to the UPF0312 family. Type 1 subfamily.

The protein resides in the periplasm. The polypeptide is UPF0312 protein YE1254 (Yersinia enterocolitica serotype O:8 / biotype 1B (strain NCTC 13174 / 8081)).